Consider the following 214-residue polypeptide: DELTA-actitoxin-Aeq1a (214 aa).

Residues Met-1–Ala-19 form the signal peptide. The propeptide occupies Leu-20–Arg-35. The plays an important role in the hemolytic activity stretch occupies residues Asp-38–Ala-47. The tract at residues Gly-46–Lys-65 is N-terminal region. Residues Ser-89, Val-122, Ser-140, Pro-142, Tyr-168, Tyr-172, and Tyr-173 each coordinate phosphocholine. The tract at residues Ser-140–Arg-155 is trp-rich region, which is important for the binding to lipid membrane. The Cell attachment site, crucial for protein stability motif lies at Arg-179 to Asp-181.

The protein belongs to the actinoporin family. Sea anemone subfamily. In terms of assembly, octamer or nonamer in membranes. Monomer in the soluble state.

It localises to the secreted. The protein localises to the nematocyst. It is found in the target cell membrane. In terms of biological role, pore-forming protein that forms cations-selective hydrophilic pores of around 1 nm and causes cardiac stimulation and cytolysis. Pore formation is a multi-step process that involves specific recognition of membrane sphingomyelin (but neither cholesterol nor phosphatidylcholine) using aromatic rich region and adjacent phosphocholine (POC) binding site, firm binding to the membrane (mainly driven by hydrophobic interactions) accompanied by the transfer of the N-terminal region to the lipid-water interface and finally pore formation after oligomerization of monomers. Cytolytic effects include red blood cells hemolysis, platelet aggregation and lysis, cytotoxic and cytostatic effects on fibroblasts. Lethality in mammals has been ascribed to severe vasospasm of coronary vessels, cardiac arrhythmia, and inotropic effects. This Actinia equina (Beadlet anemone) protein is DELTA-actitoxin-Aeq1a.